The following is a 59-amino-acid chain: uncharacterized protein (59 aa).

This is an uncharacterized protein from Treponema pallidum (strain Nichols).